We begin with the raw amino-acid sequence, 678 residues long: Alpha-L-arabinofuranosidase 1 (678 aa).

The N-terminal stretch at M1–A33 is a signal peptide. One can recognise a CBM-cenC domain in the interval N152 to V239. N181, N362, N523, and N555 each carry an N-linked (GlcNAc...) asparagine glycan.

Belongs to the glycosyl hydrolase 51 family. As to expression, expressed in roots, leaves, flowers, stems, siliques and seedlings. Observed in zones of cell proliferation, the vascular system and floral abscission zones. Expressed in the guard cells in stems, in xylem vessels and parenchyma cells surrounding the vessels, in the cambium and in the phloem, but not in the secondary xylem.

Its subcellular location is the secreted. The protein resides in the extracellular space. It is found in the extracellular matrix. It catalyses the reaction Hydrolysis of terminal non-reducing alpha-L-arabinofuranoside residues in alpha-L-arabinosides.. Functionally, may be involved in the coordinated dissolution of the cell wall matrix during abscission and in the secondary cell wall formation in xylem vessels. Prefers arabinoxylan, but may also use pectic arabinans as substrates. This is Alpha-L-arabinofuranosidase 1 (ASD1) from Arabidopsis thaliana (Mouse-ear cress).